The sequence spans 529 residues: MFNINHQLELSKRRTFAIISHPDAGKTTVTEKMLLLGKVIRTSGTIKARGNGKYAKSDWMNIEKKRGISITTSVMQFTYKNTLMNLLDTPGHEDFSEDTYRILTAVDCCLLIIDAAKGIEDRTKKLINVSRLHNTPVITFINKLDRDSREAIEILDEIEKELSLDCIPITWPISCGKNFKGICHIHDKIVNLYQKNIVKKINFNSFSSFLNEHSLKEYLGADLYTQLHEELKLAAYVYPKFSKKKFLKGDITPVLFGSALNNFGIDHILESLIKWAPSPIYRVTKTRKVEPEEKKFTGFVFKIQANMDLKHRDRIAFMRIVSGKYKKGIKLRHVRMKKDIIVSDAFSFLAGDRFSIEHAYPGDVIGIHNHGTIKIGDTFTEGEEIKFVGIPSFAPEVFRRIFLKNPLQQKKLKKGLSQLSEEGAIQVFRPMINNSLILGAIGILQFDVVIERLKIEYKIDAIYERVNISLARWIRSKNKKIISDFINKNKSYLALDISNQLIYLAPNKANLAVIKNIYNNIFFEKTREQ.

Residues 11–280 (SKRRTFAIIS…SLIKWAPSPI (270 aa)) form the tr-type G domain. Residues 20-27 (SHPDAGKT), 88-92 (DTPGH), and 142-145 (NKLD) each bind GTP.

It belongs to the TRAFAC class translation factor GTPase superfamily. Classic translation factor GTPase family. PrfC subfamily.

Its subcellular location is the cytoplasm. Increases the formation of ribosomal termination complexes and stimulates activities of RF-1 and RF-2. It binds guanine nucleotides and has strong preference for UGA stop codons. It may interact directly with the ribosome. The stimulation of RF-1 and RF-2 is significantly reduced by GTP and GDP, but not by GMP. The chain is Peptide chain release factor 3 from Buchnera aphidicola subsp. Schizaphis graminum (strain Sg).